Reading from the N-terminus, the 223-residue chain is Small ribosomal subunit protein uS3 (223 aa).

Residues 38–106 (LKRELKEKLK…EVFIDILEVN (69 aa)) enclose the KH type-2 domain.

Belongs to the universal ribosomal protein uS3 family. As to quaternary structure, part of the 30S ribosomal subunit. Forms a tight complex with proteins S10 and S14.

In terms of biological role, binds the lower part of the 30S subunit head. Binds mRNA in the 70S ribosome, positioning it for translation. In Acidobacterium capsulatum (strain ATCC 51196 / DSM 11244 / BCRC 80197 / JCM 7670 / NBRC 15755 / NCIMB 13165 / 161), this protein is Small ribosomal subunit protein uS3.